A 228-amino-acid chain; its full sequence is Mediator of RNA polymerase II transcription subunit 7-B (228 aa).

Belongs to the Mediator complex subunit 7 family. In terms of assembly, component of the Mediator complex.

It is found in the nucleus. Component of the Mediator complex, a coactivator involved in the regulated transcription of nearly all RNA polymerase II-dependent genes. Mediator functions as a bridge to convey information from gene-specific regulatory proteins to the basal RNA polymerase II transcription machinery. Mediator is recruited to promoters by direct interactions with regulatory proteins and serves as a scaffold for the assembly of a functional preinitiation complex with RNA polymerase II and the general transcription factors. This chain is Mediator of RNA polymerase II transcription subunit 7-B (med7-b), found in Xenopus laevis (African clawed frog).